Consider the following 208-residue polypeptide: Large ribosomal subunit protein uL3 (208 aa).

Residues glycine 116 to alanine 148 are disordered.

It belongs to the universal ribosomal protein uL3 family. As to quaternary structure, part of the 50S ribosomal subunit. Forms a cluster with proteins L14 and L19.

In terms of biological role, one of the primary rRNA binding proteins, it binds directly near the 3'-end of the 23S rRNA, where it nucleates assembly of the 50S subunit. The polypeptide is Large ribosomal subunit protein uL3 (Streptococcus pneumoniae (strain Hungary19A-6)).